A 221-amino-acid polypeptide reads, in one-letter code: Ethylene-inducing xylanase 4 (221 aa).

A signal peptide spans 1 to 19; sequence MVSFSTLLTACTAITGALG. Positions 28–218 constitute a GH11 domain; sequence NVTPNAQGTH…SAGRASVVVE (191 aa). Asn96 carries an N-linked (GlcNAc...) asparagine glycan. Catalysis depends on Glu114, which acts as the Nucleophile. Glu205 (proton donor) is an active-site residue.

The protein belongs to the glycosyl hydrolase 11 (cellulase G) family.

The enzyme catalyses Endohydrolysis of (1-&gt;4)-beta-D-xylosidic linkages in xylans.. Its pathway is glycan degradation; xylan degradation. Endo-1,4-beta-xylanase involved in the hydrolysis of xylan, a major structural heterogeneous polysaccharide found in plant biomass representing the second most abundant polysaccharide in the biosphere, after cellulose. May act as an elicitor of plant defense responses in certain plants but does not exhibit any cell death when transiently expressed in N.benthamiana. The protein is Ethylene-inducing xylanase 4 of Verticillium dahliae (strain VdLs.17 / ATCC MYA-4575 / FGSC 10137) (Verticillium wilt).